A 560-amino-acid polypeptide reads, in one-letter code: NAD-dependent malic enzyme (560 aa).

The active-site Proton donor is the tyrosine 100. Arginine 153 serves as a coordination point for NAD(+). Residue lysine 171 is the Proton acceptor of the active site. A divalent metal cation-binding residues include glutamate 242, aspartate 243, and aspartate 266. Residues aspartate 266 and asparagine 413 each contribute to the NAD(+) site.

This sequence belongs to the malic enzymes family. Homotetramer. Requires Mg(2+) as cofactor. It depends on Mn(2+) as a cofactor.

The catalysed reaction is (S)-malate + NAD(+) = pyruvate + CO2 + NADH. The enzyme catalyses oxaloacetate + H(+) = pyruvate + CO2. The protein is NAD-dependent malic enzyme of Psychrobacter arcticus (strain DSM 17307 / VKM B-2377 / 273-4).